We begin with the raw amino-acid sequence, 143 residues long: Large ribosomal subunit protein bL17 (143 aa).

Basic and acidic residues predominate over residues 124-133 (GAGDRARLEA). The disordered stretch occupies residues 124–143 (GAGDRARLEAEGTDAEAAAA).

The protein belongs to the bacterial ribosomal protein bL17 family. Part of the 50S ribosomal subunit. Contacts protein L32.

The sequence is that of Large ribosomal subunit protein bL17 from Mesorhizobium japonicum (strain LMG 29417 / CECT 9101 / MAFF 303099) (Mesorhizobium loti (strain MAFF 303099)).